The following is a 279-amino-acid chain: Dermonecrotic toxin LspiSicTox-betaIE3ii (279 aa).

Residue histidine 5 is part of the active site. Mg(2+)-binding residues include glutamate 25 and aspartate 27. Catalysis depends on histidine 41, which acts as the Nucleophile. 2 cysteine pairs are disulfide-bonded: cysteine 45–cysteine 51 and cysteine 47–cysteine 190. Aspartate 85 provides a ligand contact to Mg(2+).

This sequence belongs to the arthropod phospholipase D family. Class II subfamily. Mg(2+) serves as cofactor. Expressed by the venom gland.

It is found in the secreted. It catalyses the reaction an N-(acyl)-sphingosylphosphocholine = an N-(acyl)-sphingosyl-1,3-cyclic phosphate + choline. It carries out the reaction an N-(acyl)-sphingosylphosphoethanolamine = an N-(acyl)-sphingosyl-1,3-cyclic phosphate + ethanolamine. The catalysed reaction is a 1-acyl-sn-glycero-3-phosphocholine = a 1-acyl-sn-glycero-2,3-cyclic phosphate + choline. The enzyme catalyses a 1-acyl-sn-glycero-3-phosphoethanolamine = a 1-acyl-sn-glycero-2,3-cyclic phosphate + ethanolamine. Its function is as follows. Dermonecrotic toxins cleave the phosphodiester linkage between the phosphate and headgroup of certain phospholipids (sphingolipid and lysolipid substrates), forming an alcohol (often choline) and a cyclic phosphate. This toxin acts on sphingomyelin (SM). It may also act on ceramide phosphoethanolamine (CPE), lysophosphatidylcholine (LPC) and lysophosphatidylethanolamine (LPE), but not on lysophosphatidylserine (LPS), and lysophosphatidylglycerol (LPG). It acts by transphosphatidylation, releasing exclusively cyclic phosphate products as second products. Induces dermonecrosis, hemolysis, increased vascular permeability, edema, inflammatory response, and platelet aggregation. In Loxosceles spinulosa (Recluse spider), this protein is Dermonecrotic toxin LspiSicTox-betaIE3ii.